Reading from the N-terminus, the 127-residue chain is Fluoride-specific ion channel FluC (127 aa).

A run of 4 helical transmembrane segments spans residues 4–24 (TLLA…QLGV), 35–55 (LGTL…LAFF), 71–91 (TGLC…IMFL), and 103–123 (VLLN…LVTW). Residues Gly-75 and Thr-78 each contribute to the Na(+) site.

This sequence belongs to the fluoride channel Fluc/FEX (TC 1.A.43) family.

Its subcellular location is the cell inner membrane. It carries out the reaction fluoride(in) = fluoride(out). Its activity is regulated as follows. Na(+) is not transported, but it plays an essential structural role and its presence is essential for fluoride channel function. Functionally, fluoride-specific ion channel. Important for reducing fluoride concentration in the cell, thus reducing its toxicity. This Pectobacterium carotovorum subsp. carotovorum (strain PC1) protein is Fluoride-specific ion channel FluC.